We begin with the raw amino-acid sequence, 282 residues long: Autophagy protein 5 (282 aa).

A Glycyl lysine isopeptide (Lys-Gly) (interchain with G-Cter in ATG12) cross-link involves residue Lys-144.

Belongs to the ATG5 family. In terms of assembly, conjugated with ATG12. In terms of processing, conjugated to ATG12; which is essential for autophagy.

The protein resides in the preautophagosomal structure membrane. Functionally, involved in cytoplasm to vacuole transport (Cvt) and autophagic vesicle formation. Autophagy is essential for maintenance of amino acid levels and protein synthesis under nitrogen starvation. Required for selective autophagic degradation of the nucleus (nucleophagy). Also required for mitophagy, which eliminates defective or superfluous mitochondria in order to fulfill cellular energy requirements and prevent excess ROS production. Conjugation with ATG12, through a ubiquitin-like conjugating system involving ATG7 as an E1-like activating enzyme and ATG10 as an E2-like conjugating enzyme, is essential for its function. The ATG12-ATG5 conjugate acts as an E3-like enzyme which is required for lipidation of ATG8 and ATG8 association to the vesicle membranes. This is Autophagy protein 5 (ATG5) from Scheffersomyces stipitis (strain ATCC 58785 / CBS 6054 / NBRC 10063 / NRRL Y-11545) (Yeast).